A 918-amino-acid polypeptide reads, in one-letter code: Protein SEY1 homolog (918 aa).

Over 1 to 701 (MESSNHLPNK…AGTSVSSWRN (701 aa)) the chain is Cytoplasmic. Positions 46 to 280 (GFKFNVVTIL…VPSDGFFVYS (235 aa)) constitute a GB1/RHD3-type G domain. Residue 56 to 63 (GSQSSGKS) coordinates GTP. The stretch at 554–626 (SLVLLLKATQ…DALTLLQVLK (73 aa)) forms a coiled coil. The chain crosses the membrane as a helical span at residues 702–722 (IPPVFWLVLLVLGWNELRAAF). Residues 723-725 (RVL) are Lumenal-facing. A helical membrane pass occupies residues 726 to 746 (LKFYILIPLLIVSYFTFSYSA). Residues 747 to 918 (NKLLGPKANE…CGKAVHLAQW (172 aa)) lie on the Cytoplasmic side of the membrane.

It belongs to the TRAFAC class dynamin-like GTPase superfamily. GB1/RHD3 GTPase family. RHD3 subfamily.

Its subcellular location is the endoplasmic reticulum membrane. Probable GTP-binding protein that may be involved in cell development. The sequence is that of Protein SEY1 homolog from Theileria annulata.